Consider the following 537-residue polypeptide: DEAD-box ATP-dependent RNA helicase 5 (537 aa).

The tract at residues 1–97 is disordered; that stretch reads MAGQKQELPV…EDLGEGESEQ (97 aa). Residues 22–80 adopt a coiled-coil conformation; that stretch reads TNKKKKKSKKNKHTEENHEVEEVPQEVTNGVEEELSNKEKKKKRKREEKESEKNKKKDV. Residues 23 to 33 show a composition bias toward basic residues; the sequence is NKKKKKSKKNK. Over residues 68 to 87 the composition is skewed to basic and acidic residues; the sequence is EEKESEKNKKKDVPEKKLEA. The Q motif motif lies at 116-142; the sequence is KTFAESNLPENVLDCCKTFEKPSPIQS. Positions 145–324 constitute a Helicase ATP-binding domain; that stretch reads WPFLLDGRDL…QEFMDPNPIK (180 aa). 158 to 165 contacts ATP; the sequence is AKTGSGKT. The DEAD box signature appears at 272-275; that stretch reads DEAD. The Helicase C-terminal domain maps to 349 to 500; it reads ARDQRLIALL…VVPADLLKFG (152 aa). Residue Ser533 is modified to Phosphoserine.

It belongs to the DEAD box helicase family. DDX5/DBP2 subfamily.

The protein localises to the nucleus. The protein resides in the nucleolus. The enzyme catalyses ATP + H2O = ADP + phosphate + H(+). Its function is as follows. ATP-dependent RNA helicase required for 60S ribosomal subunit synthesis. Involved in efficient pre-rRNA processing, predominantly at site A3, which is necessary for the normal formation of 25S and 5.8S rRNAs. The protein is DEAD-box ATP-dependent RNA helicase 5 (RH5) of Arabidopsis thaliana (Mouse-ear cress).